A 489-amino-acid chain; its full sequence is Otolin-1-A (489 aa).

An N-terminal signal peptide occupies residues 1-23 (MPNILHPFIIIMTLLVVATGNQA). The tract at residues 27-57 (KTTQWPRMKPTKKPPPRDEGPSKLGSISTTV) is disordered. A glycan (N-linked (GlcNAc...) asparagine) is linked at Asn-109. The interval 133-335 (GPVGEKGLPG…PGMKGTRGLK (203 aa)) is disordered. Gly residues predominate over residues 142–151 (GIPGGKGEMG). Collagen-like domains follow at residues 145–204 (GGKG…KGDK), 205–255 (GDTG…KGDK), and 264–323 (GQKG…PGQR). The segment covering 192-206 (QGEKGESGPKGDKGD) has biased composition (basic and acidic residues). Asn-225 is a glycosylation site (N-linked (GlcNAc...) asparagine). Residues 226–235 (GTKGGMGEPG) show a composition bias toward gly residues. The span at 248 to 257 (IKGEKGDKGD) shows a compositional bias: basic and acidic residues. Residue Asn-287 is glycosylated (N-linked (GlcNAc...) asparagine). The segment covering 290-310 (DGLPGSKGPKGDPGPLSKQGE) has biased composition (low complexity). Residues 351 to 488 (AVQKRSAFSV…GFLLYADATK (138 aa)) form the C1q domain. N-linked (GlcNAc...) asparagine glycans are attached at residues Asn-391 and Asn-396.

This sequence belongs to the OTOL1 family. Homooligomer; disulfide-linked; probably forms homotrimers. Interacts with otomp.

It is found in the secreted. The protein localises to the extracellular space. Its subcellular location is the extracellular matrix. Functionally, collagen-like protein, which provides an organic scaffold for otoliths onto the sensory epithelium of the inner ear. Acts as a scaffold for biomineralization by sequestering calcium. This Danio rerio (Zebrafish) protein is Otolin-1-A (otol1a).